Consider the following 60-residue polypeptide: Large ribosomal subunit protein uL30 (60 aa).

It belongs to the universal ribosomal protein uL30 family. In terms of assembly, part of the 50S ribosomal subunit.

The sequence is that of Large ribosomal subunit protein uL30 from Streptococcus uberis (strain ATCC BAA-854 / 0140J).